The sequence spans 174 residues: Ribosome maturation factor RimP (174 aa).

It belongs to the RimP family.

Its subcellular location is the cytoplasm. In terms of biological role, required for maturation of 30S ribosomal subunits. The sequence is that of Ribosome maturation factor RimP from Bdellovibrio bacteriovorus (strain ATCC 15356 / DSM 50701 / NCIMB 9529 / HD100).